A 439-amino-acid polypeptide reads, in one-letter code: GTPase Der (439 aa).

2 EngA-type G domains span residues 4–168 and 177–352; these read PIVA…KDDE and INIA…DNYT. Residues 10-17, 57-61, 120-123, 183-190, 230-234, and 295-298 each bind GTP; these read GRPNVGKS, DTGGI, NKID, GKPNVGKS, DTAGL, and NKWD. The 85-residue stretch at 353 to 437 folds into the KH-like domain; that stretch reads KRVKTGVLND…GIKTEFRERK (85 aa).

The protein belongs to the TRAFAC class TrmE-Era-EngA-EngB-Septin-like GTPase superfamily. EngA (Der) GTPase family. As to quaternary structure, associates with the 50S ribosomal subunit.

In terms of biological role, GTPase that plays an essential role in the late steps of ribosome biogenesis. In Clostridium botulinum (strain Loch Maree / Type A3), this protein is GTPase Der.